The following is a 130-amino-acid chain: Small ribosomal subunit protein uS9 (130 aa).

This sequence belongs to the universal ribosomal protein uS9 family.

In Paracidovorax citrulli (strain AAC00-1) (Acidovorax citrulli), this protein is Small ribosomal subunit protein uS9.